Reading from the N-terminus, the 406-residue chain is Tyrosine--tRNA ligase (406 aa).

Y35 is an L-tyrosine binding site. Positions 40-49 (PTGPSLHIGH) match the 'HIGH' region motif. Residues Y168 and Q172 each coordinate L-tyrosine. A 'KMSKS' region motif is present at residues 228–232 (KMGKS). ATP is bound at residue K231. Residues 339-405 (IGIIDLFAEA…GKKRFMRIIF (67 aa)) enclose the S4 RNA-binding domain.

Belongs to the class-I aminoacyl-tRNA synthetase family. TyrS type 1 subfamily. Homodimer.

Its subcellular location is the cytoplasm. It carries out the reaction tRNA(Tyr) + L-tyrosine + ATP = L-tyrosyl-tRNA(Tyr) + AMP + diphosphate + H(+). Its function is as follows. Catalyzes the attachment of tyrosine to tRNA(Tyr) in a two-step reaction: tyrosine is first activated by ATP to form Tyr-AMP and then transferred to the acceptor end of tRNA(Tyr). The chain is Tyrosine--tRNA ligase from Treponema denticola (strain ATCC 35405 / DSM 14222 / CIP 103919 / JCM 8153 / KCTC 15104).